The chain runs to 237 residues: Phosphoribosylaminoimidazole-succinocarboxamide synthase (237 aa).

Belongs to the SAICAR synthetase family.

It catalyses the reaction 5-amino-1-(5-phospho-D-ribosyl)imidazole-4-carboxylate + L-aspartate + ATP = (2S)-2-[5-amino-1-(5-phospho-beta-D-ribosyl)imidazole-4-carboxamido]succinate + ADP + phosphate + 2 H(+). It functions in the pathway purine metabolism; IMP biosynthesis via de novo pathway; 5-amino-1-(5-phospho-D-ribosyl)imidazole-4-carboxamide from 5-amino-1-(5-phospho-D-ribosyl)imidazole-4-carboxylate: step 1/2. This is Phosphoribosylaminoimidazole-succinocarboxamide synthase from Proteus mirabilis (strain HI4320).